The following is a 716-amino-acid chain: Phospholipid phosphatase-related protein type 3 (716 aa).

The next 3 helical transmembrane spans lie at 18–38 (LPCF…SLYF), 70–90 (LIPL…SIMV), and 131–151 (FVGV…VIQL). N167 carries an N-linked (GlcNAc...) asparagine glycan. Helical transmembrane passes span 205 to 225 (HATL…SVIS), 231 to 251 (LKPI…LTQI), and 261 to 281 (VYAG…HAVG). Positions 311–334 (SMYQQNKSVSTDELGPPGRLEGVP) are disordered. Over residues 312 to 321 (MYQQNKSVST) the composition is skewed to polar residues. N-linked (GlcNAc...) asparagine glycosylation occurs at N316. Phosphoserine occurs at positions 320 and 351. Residue T374 is modified to Phosphothreonine. The segment at 416 to 488 (GRGLGLPDEA…RVILPPRPGP (73 aa)) is disordered. A Phosphoserine modification is found at S426. Over residues 437–460 (VAEEEEEEEEEEEEEEEEEEEEEG) the composition is skewed to acidic residues. Phosphoserine is present on S506. The tract at residues 548–589 (AMSKAAGGPKAETASSSSASSDSSQYRSPSDRDSASIVTIDA) is disordered. Residues 562-575 (SSSSASSDSSQYRS) show a composition bias toward low complexity. Residue S641 is modified to Phosphoserine. Residues 664–694 (GEGLPPPGASEGALGAGSRESTLRRQVGALG) are disordered.

The protein belongs to the PA-phosphatase related phosphoesterase family.

Its subcellular location is the membrane. This is Phospholipid phosphatase-related protein type 3 from Rattus norvegicus (Rat).